The sequence spans 185 residues: Threonylcarbamoyl-AMP synthase (185 aa).

The YrdC-like domain occupies 4–185; sequence DWRVQQVARV…LRSGEVIRPA (182 aa).

The protein belongs to the SUA5 family. TsaC subfamily.

It localises to the cytoplasm. The enzyme catalyses L-threonine + hydrogencarbonate + ATP = L-threonylcarbamoyladenylate + diphosphate + H2O. Its function is as follows. Required for the formation of a threonylcarbamoyl group on adenosine at position 37 (t(6)A37) in tRNAs that read codons beginning with adenine. Catalyzes the conversion of L-threonine, HCO(3)(-)/CO(2) and ATP to give threonylcarbamoyl-AMP (TC-AMP) as the acyladenylate intermediate, with the release of diphosphate. In Stutzerimonas stutzeri (strain A1501) (Pseudomonas stutzeri), this protein is Threonylcarbamoyl-AMP synthase.